The following is a 249-amino-acid chain: NADH-quinone oxidoreductase subunit C (249 aa).

Belongs to the complex I 30 kDa subunit family. As to quaternary structure, NDH-1 is composed of 14 different subunits. Subunits NuoB, C, D, E, F, and G constitute the peripheral sector of the complex.

The protein resides in the cell inner membrane. The catalysed reaction is a quinone + NADH + 5 H(+)(in) = a quinol + NAD(+) + 4 H(+)(out). NDH-1 shuttles electrons from NADH, via FMN and iron-sulfur (Fe-S) centers, to quinones in the respiratory chain. The immediate electron acceptor for the enzyme in this species is believed to be ubiquinone. Couples the redox reaction to proton translocation (for every two electrons transferred, four hydrogen ions are translocated across the cytoplasmic membrane), and thus conserves the redox energy in a proton gradient. This is NADH-quinone oxidoreductase subunit C from Xylella fastidiosa (strain M12).